Reading from the N-terminus, the 93-residue chain is Large ribosomal subunit protein bL31 (93 aa).

A disordered region spans residues 72-93 (VKTVSSNADNQKETTEELIKNK). Basic and acidic residues predominate over residues 81-93 (NQKETTEELIKNK).

This sequence belongs to the bacterial ribosomal protein bL31 family. Type A subfamily. In terms of assembly, part of the 50S ribosomal subunit.

In terms of biological role, binds the 23S rRNA. This chain is Large ribosomal subunit protein bL31, found in Onion yellows phytoplasma (strain OY-M).